The following is a 256-amino-acid chain: uncharacterized protein (256 aa).

The N-terminal stretch at 1 to 24 (MIKRVNKLVLGISLLFLVISIAAG) is a signal peptide. C25 carries N-palmitoyl cysteine lipidation. The S-diacylglycerol cysteine moiety is linked to residue C25.

It belongs to the staphylococcal tandem lipoprotein family.

The protein localises to the cell membrane. This is an uncharacterized protein from Staphylococcus aureus.